The chain runs to 117 residues: MIEQHPKQGKIQTRNYAGPWRKTPGRLLGTGLIRLYQITLSNFIGNQCRYMPTCSEYTYEAIARHGLWAGAWMGLFRIVCCNPFGTHGFDPVPTSLGSSYYFYKPWCYRKISTKHNK.

Belongs to the UPF0161 family.

It is found in the cell inner membrane. Functionally, could be involved in insertion of integral membrane proteins into the membrane. The polypeptide is Putative membrane protein insertion efficiency factor (Bartonella bacilliformis (strain ATCC 35685 / KC583 / Herrer 020/F12,63)).